We begin with the raw amino-acid sequence, 66 residues long: Large ribosomal subunit protein bL35 (66 aa).

This sequence belongs to the bacterial ribosomal protein bL35 family.

This chain is Large ribosomal subunit protein bL35, found in Brucella anthropi (strain ATCC 49188 / DSM 6882 / CCUG 24695 / JCM 21032 / LMG 3331 / NBRC 15819 / NCTC 12168 / Alc 37) (Ochrobactrum anthropi).